The sequence spans 521 residues: Bifunctional purine biosynthesis protein PurH (521 aa).

One can recognise an MGS-like domain in the interval 1-145 (MIKQALISVS…KNHRDVTVVV (145 aa)).

Belongs to the PurH family.

It catalyses the reaction (6R)-10-formyltetrahydrofolate + 5-amino-1-(5-phospho-beta-D-ribosyl)imidazole-4-carboxamide = 5-formamido-1-(5-phospho-D-ribosyl)imidazole-4-carboxamide + (6S)-5,6,7,8-tetrahydrofolate. It carries out the reaction IMP + H2O = 5-formamido-1-(5-phospho-D-ribosyl)imidazole-4-carboxamide. It participates in purine metabolism; IMP biosynthesis via de novo pathway; 5-formamido-1-(5-phospho-D-ribosyl)imidazole-4-carboxamide from 5-amino-1-(5-phospho-D-ribosyl)imidazole-4-carboxamide (10-formyl THF route): step 1/1. The protein operates within purine metabolism; IMP biosynthesis via de novo pathway; IMP from 5-formamido-1-(5-phospho-D-ribosyl)imidazole-4-carboxamide: step 1/1. The polypeptide is Bifunctional purine biosynthesis protein PurH (Burkholderia vietnamiensis (strain G4 / LMG 22486) (Burkholderia cepacia (strain R1808))).